Consider the following 159-residue polypeptide: Phosphopantetheine adenylyltransferase (159 aa).

Residue Thr-9 participates in substrate binding. Residues 9–10 (TF) and His-17 contribute to the ATP site. Residues Lys-41, Leu-73, and Arg-87 each contribute to the substrate site. ATP is bound by residues 88 to 90 (GLR), Glu-98, and 123 to 129 (YSFISST).

The protein belongs to the bacterial CoaD family. Homohexamer. Mg(2+) is required as a cofactor.

Its subcellular location is the cytoplasm. The catalysed reaction is (R)-4'-phosphopantetheine + ATP + H(+) = 3'-dephospho-CoA + diphosphate. It functions in the pathway cofactor biosynthesis; coenzyme A biosynthesis; CoA from (R)-pantothenate: step 4/5. Its function is as follows. Reversibly transfers an adenylyl group from ATP to 4'-phosphopantetheine, yielding dephospho-CoA (dPCoA) and pyrophosphate. In Pseudomonas fluorescens (strain ATCC BAA-477 / NRRL B-23932 / Pf-5), this protein is Phosphopantetheine adenylyltransferase.